The chain runs to 458 residues: ATP synthase subunit beta (458 aa).

148 to 155 provides a ligand contact to ATP; the sequence is GGAGVGKT.

It belongs to the ATPase alpha/beta chains family. In terms of assembly, F-type ATPases have 2 components, CF(1) - the catalytic core - and CF(0) - the membrane proton channel. CF(1) has five subunits: alpha(3), beta(3), gamma(1), delta(1), epsilon(1). CF(0) has three main subunits: a(1), b(2) and c(9-12). The alpha and beta chains form an alternating ring which encloses part of the gamma chain. CF(1) is attached to CF(0) by a central stalk formed by the gamma and epsilon chains, while a peripheral stalk is formed by the delta and b chains.

It is found in the cell inner membrane. The catalysed reaction is ATP + H2O + 4 H(+)(in) = ADP + phosphate + 5 H(+)(out). Functionally, produces ATP from ADP in the presence of a proton gradient across the membrane. The catalytic sites are hosted primarily by the beta subunits. The polypeptide is ATP synthase subunit beta (Laribacter hongkongensis (strain HLHK9)).